A 63-amino-acid chain; its full sequence is Large ribosomal subunit protein bL32 (63 aa).

Residues 1–23 form a disordered region; the sequence is MATPKAKVSKSRRDKRRAQFTAR. Over residues 7–18 the composition is skewed to basic residues; it reads KVSKSRRDKRRA.

The protein belongs to the bacterial ribosomal protein bL32 family.

The protein is Large ribosomal subunit protein bL32 of Chlorobium phaeobacteroides (strain BS1).